The primary structure comprises 442 residues: Probable glycine dehydrogenase (decarboxylating) subunit 1 (442 aa).

The protein belongs to the GcvP family. N-terminal subunit subfamily. The glycine cleavage system is composed of four proteins: P, T, L and H. In this organism, the P 'protein' is a heterodimer of two subunits.

The enzyme catalyses N(6)-[(R)-lipoyl]-L-lysyl-[glycine-cleavage complex H protein] + glycine + H(+) = N(6)-[(R)-S(8)-aminomethyldihydrolipoyl]-L-lysyl-[glycine-cleavage complex H protein] + CO2. Its function is as follows. The glycine cleavage system catalyzes the degradation of glycine. The P protein binds the alpha-amino group of glycine through its pyridoxal phosphate cofactor; CO(2) is released and the remaining methylamine moiety is then transferred to the lipoamide cofactor of the H protein. The polypeptide is Probable glycine dehydrogenase (decarboxylating) subunit 1 (Geotalea daltonii (strain DSM 22248 / JCM 15807 / FRC-32) (Geobacter daltonii)).